A 209-amino-acid chain; its full sequence is Ribosomal RNA large subunit methyltransferase E (209 aa).

S-adenosyl-L-methionine contacts are provided by glycine 63, tryptophan 65, aspartate 83, aspartate 99, and aspartate 124. Residue lysine 164 is the Proton acceptor of the active site. Positions 191–209 (EASRGRSREVYIVATGYKG) constitute a TRAM domain.

This sequence belongs to the class I-like SAM-binding methyltransferase superfamily. RNA methyltransferase RlmE family.

The protein localises to the cytoplasm. It catalyses the reaction uridine(2552) in 23S rRNA + S-adenosyl-L-methionine = 2'-O-methyluridine(2552) in 23S rRNA + S-adenosyl-L-homocysteine + H(+). Its function is as follows. Specifically methylates the uridine in position 2552 of 23S rRNA at the 2'-O position of the ribose in the fully assembled 50S ribosomal subunit. The protein is Ribosomal RNA large subunit methyltransferase E of Haemophilus influenzae (strain ATCC 51907 / DSM 11121 / KW20 / Rd).